The primary structure comprises 339 residues: Photosystem II assembly lipoprotein Ycf48 (339 aa).

The first 22 residues, 1 to 22 (MVIVKSWQKIFTLLVVLLLCIG), serve as a signal peptide directing secretion. Cysteine 23 is lipidated: N-palmitoyl cysteine. Cysteine 23 is lipidated: S-diacylglycerol cysteine.

The protein belongs to the Ycf48 family. As to quaternary structure, part of early PSII assembly complexes which includes D1 (psbA) and PsbI; not found in mature PSII. Binds to the lumenal side of PSII complexes. Interacts with YidC.

The protein resides in the cellular thylakoid membrane. Functionally, a factor required for optimal assembly of photosystem II (PSII), acting in the early stages of PSII assembly. Also plays a role in replacement of photodamaged D1 (psbA). Assists YidC in synthesis of chlorophyll-binding proteins. The chain is Photosystem II assembly lipoprotein Ycf48 from Nostoc sp. (strain PCC 7120 / SAG 25.82 / UTEX 2576).